We begin with the raw amino-acid sequence, 244 residues long: Sugar fermentation stimulation protein homolog (244 aa).

It belongs to the SfsA family.

This Dinoroseobacter shibae (strain DSM 16493 / NCIMB 14021 / DFL 12) protein is Sugar fermentation stimulation protein homolog.